A 154-amino-acid polypeptide reads, in one-letter code: tRNA (cytidine(34)-2'-O)-methyltransferase (154 aa).

4 residues coordinate S-adenosyl-L-methionine: Leu-78, Gly-100, Ile-122, and Ser-130.

The protein belongs to the class IV-like SAM-binding methyltransferase superfamily. RNA methyltransferase TrmH family. TrmL subfamily. In terms of assembly, homodimer.

The protein resides in the cytoplasm. It catalyses the reaction cytidine(34) in tRNA + S-adenosyl-L-methionine = 2'-O-methylcytidine(34) in tRNA + S-adenosyl-L-homocysteine + H(+). The enzyme catalyses 5-carboxymethylaminomethyluridine(34) in tRNA(Leu) + S-adenosyl-L-methionine = 5-carboxymethylaminomethyl-2'-O-methyluridine(34) in tRNA(Leu) + S-adenosyl-L-homocysteine + H(+). Functionally, methylates the ribose at the nucleotide 34 wobble position in the two leucyl isoacceptors tRNA(Leu)(CmAA) and tRNA(Leu)(cmnm5UmAA). Catalyzes the methyl transfer from S-adenosyl-L-methionine to the 2'-OH of the wobble nucleotide. The protein is tRNA (cytidine(34)-2'-O)-methyltransferase of Saccharophagus degradans (strain 2-40 / ATCC 43961 / DSM 17024).